Here is an 840-residue protein sequence, read N- to C-terminus: Mechanosensitive ion channel protein Msy2 (840 aa).

Residues 1 to 68 are Cytoplasmic-facing; the sequence is MNEHRREPHR…WFNNLSFITR (68 aa). Residues 69-89 traverse the membrane as a helical segment; it reads WITIWFPLAGALVIPLAVGVS. Residues 90–100 lie on the Lumenal side of the membrane; the sequence is PYPNAKLGGVR. Residues 101-121 form a helical membrane-spanning segment; sequence IFWIFVWLEVAWGGFWVSRVI. Residues 122 to 126 lie on the Cytoplasmic side of the membrane; it reads ARLLP. A helical transmembrane segment spans residues 127–147; that stretch reads YILYPLMGILPFTMYKYTVIL. Over 148–151 the chain is Lumenal; it reads TALE. Residues 152 to 172 form a helical membrane-spanning segment; it reads MPLAIFFCSIVCVCTFSPIMI. Residues 173–225 lie on the Cytoplasmic side of the membrane; the sequence is GKGNFTSTTVTTTTSATATPTASASSNAVESVFVTKTAASVPSWIKVITKILG. Residues 226–246 form a helical membrane-spanning segment; that stretch reads AAVVTSIVLLLEKIFLHFIGF. The Lumenal portion of the chain corresponds to 247–449; it reads HYHEVQYQYR…LALGKLDRVG (203 aa). The 36-residue stretch at 392 to 427 folds into the EF-hand domain; the sequence is IPDDEINDIFHILDNDYSRTVTLDEMEQFTREISIE. The helical transmembrane segment at 450–491 threads the bilayer; it reads LGVVGIIAVLTFISFLDTSFATILAAFGTTLLSLSFVFSTSA. Residues 492–840 lie on the Cytoplasmic side of the membrane; it reads QELMSSIIFL…SQNMDGQIQY (349 aa). Disordered regions lie at residues 677 to 730 and 775 to 819; these read EYSK…KRED and ESNG…NTQA. The span at 688-700 shows a compositional bias: low complexity; the sequence is SDISSTASSNSLS. Residues 708–730 are compositionally biased toward basic and acidic residues; the sequence is SESRNYHTHDEDNSSDDNHKRED. A compositionally biased stretch (low complexity) spans 776–819; it reads SNGNANGDNTATNSQGATDNGQTTTNTTQNNVDNTQATTDNTQA.

This sequence belongs to the MscS (TC 1.A.23) family.

The protein localises to the endoplasmic reticulum membrane. Functionally, regulates intracellular calcium levels and cell volume for survival in response to hypo-osmotic shock. Involved in maintaining vacuole integrity and protecting the nuclear envelope upon hypo-osmotic shock. The protein is Mechanosensitive ion channel protein Msy2 of Schizosaccharomyces pombe (strain 972 / ATCC 24843) (Fission yeast).